The following is a 118-amino-acid chain: Small ribosomal subunit protein uS13 (118 aa).

The disordered stretch occupies residues 94–118; that stretch reads GLPVRGQRTKTNARTRKGPRKPIRK.

The protein belongs to the universal ribosomal protein uS13 family. As to quaternary structure, part of the 30S ribosomal subunit. Forms a loose heterodimer with protein S19. Forms two bridges to the 50S subunit in the 70S ribosome.

In terms of biological role, located at the top of the head of the 30S subunit, it contacts several helices of the 16S rRNA. In the 70S ribosome it contacts the 23S rRNA (bridge B1a) and protein L5 of the 50S subunit (bridge B1b), connecting the 2 subunits; these bridges are implicated in subunit movement. Contacts the tRNAs in the A and P-sites. This Marinobacter nauticus (strain ATCC 700491 / DSM 11845 / VT8) (Marinobacter aquaeolei) protein is Small ribosomal subunit protein uS13.